Consider the following 650-residue polypeptide: MQPWYHKLGRQGRQLAEQWQTDAEPWGVATPTPLDYLFDELTAPKPSTTPDKVLSYLAYYYPKLKNENNVELLTLCFLRCPLFFNDAQLVSFSDNYRVIECFKYIMDKKFQISQPTLPFYRFYNALFGALAKVVADSACAWKVVPVAVGCLLSVDSRNDYDRYPEHFQLIATVDAKLVDMAAHTLERSMDGPLSNDLLCLNVVALSCVQDKLVDSQLLRILRVRSDILKILTELTFNSPYGLDNGRLLTKSNANTPIVVRHLNRISFLFTKLTSIHPKIVLLADDLDLILNRIQTFSESVLSIPNPSETQWSTLRVVLFAQVMMFEGIMARFFQINNHSLNSTVLPTLCRKILTTLFNFNFVVDRIGTGGFESYNFVYASCLSTLTSYDIPTAETLIKCWTSSVAFKKVDNSATERGKLLFDLQFIENVVNLVSDSLKFEFIIPIVQDLIGNAQDQAVLESAHSVMLKYFTSVDTYNEAQLVDYTNNVKHVGAQLIDYLTLSLDQFPARLSLSQVGIIVETLAKITFPDTAVHECDPELYRELLLLVYNRCLVATSEELPNVQAPPKTRHGAFTSLLIRILPLIPFDEYQSWLERTLSLAFRTVGDERTYLLDLLWDSILGTNRHYPQKGYVGIQWWYEHVNESQEKAKL.

Residues Ala648–Leu650 carry the Microbody targeting signal motif.

The protein resides in the peroxisome matrix. Essential for peroxisome biogenesis. May play a role in triggering the protein import competence of individual peroxisomes. It may interact with PEX10. In Pichia angusta (Yeast), this protein is Peroxisomal biogenesis factor 8 (PEX8).